The primary structure comprises 106 residues: Putative protein SH (106 aa).

The tract at residues 48–106 (HSQQNNSGHQFGDRFHSKGHQDTEGRILWKEASTRTTDSTETADTQLVQRQGNGGICLS) is disordered. Basic and acidic residues predominate over residues 58 to 80 (FGDRFHSKGHQDTEGRILWKEAS). Residues 81–92 (TRTTDSTETADT) show a composition bias toward low complexity.

As to expression, heart.

Functionally, may be involved with the regulation of GNRH gene expression. It is not known if this protein is transcribed. In Rattus norvegicus (Rat), this protein is Putative protein SH.